Reading from the N-terminus, the 571-residue chain is Sulfite reductase [NADPH] hemoprotein beta-component (571 aa).

[4Fe-4S] cluster-binding residues include cysteine 435, cysteine 441, cysteine 480, and cysteine 484. Position 484 (cysteine 484) interacts with siroheme.

Belongs to the nitrite and sulfite reductase 4Fe-4S domain family. In terms of assembly, alpha(8)-beta(8). The alpha component is a flavoprotein, the beta component is a hemoprotein. The cofactor is siroheme. Requires [4Fe-4S] cluster as cofactor.

It carries out the reaction hydrogen sulfide + 3 NADP(+) + 3 H2O = sulfite + 3 NADPH + 4 H(+). Its pathway is sulfur metabolism; hydrogen sulfide biosynthesis; hydrogen sulfide from sulfite (NADPH route): step 1/1. Its function is as follows. Component of the sulfite reductase complex that catalyzes the 6-electron reduction of sulfite to sulfide. This is one of several activities required for the biosynthesis of L-cysteine from sulfate. In Musicola paradisiaca (strain Ech703) (Dickeya paradisiaca), this protein is Sulfite reductase [NADPH] hemoprotein beta-component.